Reading from the N-terminus, the 228-residue chain is 3-dehydroquinate dehydratase (228 aa).

3-dehydroquinate is bound by residues serine 26, 51–53 (EIR), and arginine 84. Histidine 127 functions as the Proton donor/acceptor in the catalytic mechanism. The Schiff-base intermediate with substrate role is filled by lysine 150. Residues arginine 190, threonine 209, and glutamine 213 each coordinate 3-dehydroquinate.

This sequence belongs to the type-I 3-dehydroquinase family. In terms of assembly, homodimer.

The enzyme catalyses 3-dehydroquinate = 3-dehydroshikimate + H2O. It functions in the pathway metabolic intermediate biosynthesis; chorismate biosynthesis; chorismate from D-erythrose 4-phosphate and phosphoenolpyruvate: step 3/7. In terms of biological role, involved in the third step of the chorismate pathway, which leads to the biosynthesis of aromatic amino acids. Catalyzes the cis-dehydration of 3-dehydroquinate (DHQ) and introduces the first double bond of the aromatic ring to yield 3-dehydroshikimate. This Thermoplasma acidophilum (strain ATCC 25905 / DSM 1728 / JCM 9062 / NBRC 15155 / AMRC-C165) protein is 3-dehydroquinate dehydratase.